The following is a 239-amino-acid chain: tRNA1(Val) (adenine(37)-N6)-methyltransferase (239 aa).

It belongs to the methyltransferase superfamily. tRNA (adenine-N(6)-)-methyltransferase family.

It localises to the cytoplasm. The catalysed reaction is adenosine(37) in tRNA1(Val) + S-adenosyl-L-methionine = N(6)-methyladenosine(37) in tRNA1(Val) + S-adenosyl-L-homocysteine + H(+). Its function is as follows. Specifically methylates the adenine in position 37 of tRNA(1)(Val) (anticodon cmo5UAC). The protein is tRNA1(Val) (adenine(37)-N6)-methyltransferase of Vibrio vulnificus (strain CMCP6).